A 506-amino-acid chain; its full sequence is Cytochrome P450 6a8 (506 aa).

A heme-binding site is contributed by Cys451.

This sequence belongs to the cytochrome P450 family. Heme serves as cofactor.

Its subcellular location is the endoplasmic reticulum membrane. The protein localises to the microsome membrane. In terms of biological role, involved in the metabolism of insect hormones and in the breakdown of synthetic insecticides. The chain is Cytochrome P450 6a8 (Cyp6a8) from Drosophila melanogaster (Fruit fly).